The sequence spans 441 residues: Histidinol dehydrogenase (441 aa).

NAD(+) is bound by residues Tyr-136, Gln-197, and Asn-220. Residues Ser-243, Gln-265, and His-268 each contribute to the substrate site. 2 residues coordinate Zn(2+): Gln-265 and His-268. Catalysis depends on proton acceptor residues Glu-333 and His-334. Residues His-334, Asp-367, Glu-421, and His-426 each coordinate substrate. Asp-367 provides a ligand contact to Zn(2+). Position 426 (His-426) interacts with Zn(2+).

The protein belongs to the histidinol dehydrogenase family. Zn(2+) serves as cofactor.

It carries out the reaction L-histidinol + 2 NAD(+) + H2O = L-histidine + 2 NADH + 3 H(+). The protein operates within amino-acid biosynthesis; L-histidine biosynthesis; L-histidine from 5-phospho-alpha-D-ribose 1-diphosphate: step 9/9. Catalyzes the sequential NAD-dependent oxidations of L-histidinol to L-histidinaldehyde and then to L-histidine. This Pseudomonas fluorescens (strain Pf0-1) protein is Histidinol dehydrogenase.